Here is a 393-residue protein sequence, read N- to C-terminus: Probable protein phosphatase 2C 68 (393 aa).

The PPM-type phosphatase domain maps to 56 to 359 (DFSIAVVQAN…DDITVVVIFI (304 aa)). Asp-87, Gly-88, Asp-291, and Asp-350 together coordinate Mn(2+).

The protein belongs to the PP2C family. Mg(2+) serves as cofactor. The cofactor is Mn(2+).

It catalyses the reaction O-phospho-L-seryl-[protein] + H2O = L-seryl-[protein] + phosphate. The enzyme catalyses O-phospho-L-threonyl-[protein] + H2O = L-threonyl-[protein] + phosphate. In terms of biological role, may dephosphorylate and repress plasma membrane H(+)-ATPases (PM H(+)-ATPases, e.g. AHA1 and AHA2), thus influencing negatively plant growth and fitness. This is Probable protein phosphatase 2C 68 from Arabidopsis thaliana (Mouse-ear cress).